The following is a 79-amino-acid chain: Small ribosomal subunit protein bS18 (79 aa).

The protein belongs to the bacterial ribosomal protein bS18 family. Part of the 30S ribosomal subunit. Forms a tight heterodimer with protein bS6.

Binds as a heterodimer with protein bS6 to the central domain of the 16S rRNA, where it helps stabilize the platform of the 30S subunit. The protein is Small ribosomal subunit protein bS18 of Salinispora arenicola (strain CNS-205).